The primary structure comprises 308 residues: tRNA dimethylallyltransferase (308 aa).

Residue 9–16 participates in ATP binding; sequence GPTAVGKT. 11–16 serves as a coordination point for substrate; sequence TAVGKT. An interaction with substrate tRNA region spans residues 34–37; sequence DSMQ.

Belongs to the IPP transferase family. Monomer. It depends on Mg(2+) as a cofactor.

The catalysed reaction is adenosine(37) in tRNA + dimethylallyl diphosphate = N(6)-dimethylallyladenosine(37) in tRNA + diphosphate. Its function is as follows. Catalyzes the transfer of a dimethylallyl group onto the adenine at position 37 in tRNAs that read codons beginning with uridine, leading to the formation of N6-(dimethylallyl)adenosine (i(6)A). This is tRNA dimethylallyltransferase from Lactobacillus delbrueckii subsp. bulgaricus (strain ATCC BAA-365 / Lb-18).